A 198-amino-acid polypeptide reads, in one-letter code: Virion membrane protein A17 precursor homolog (198 aa).

The Virion surface segment spans residues 1-55 (MDNNYLNYYNVFEEFDAGAGIKEKELFTEEQQLSFLPKKGLGNGGFDGVERLYSN). Residues 56-76 (IINNNDIKSLLALIMLVFAIN) form a helical membrane-spanning segment. The Intravirion portion of the chain corresponds to 77–145 (TNSLVALIFI…TSKISKGFKR (69 aa)). The chain crosses the membrane as a helical span at residues 146–166 (AIDVVLLVILGFYIVKIYGID). At 167–198 (RQISIPSRRYCRQMSGPSSLENLNAFQTHSNY) the chain is on the virion surface side. The residue at position 198 (tyrosine 198) is a Phosphotyrosine.

This sequence belongs to the chordopoxvirinae A17 family. As to quaternary structure, interacts (via N-terminus) with D13 scaffold; this interaction helps D13 to associate with membranes. Interacts with A14. Interacts with A27; this interaction allows A27 to be anchored in the mature virion (MV) membrane. Part of a complex composed of A17, A25, A26 and A27. The 22 kDa precursor is probably cleaved by the I7 protease during virus maturation. Post-translationally, phosphorylated on tyrosine and threonine. Its phosphorylation state is regulated by the F10 kinase and the H1 phosphatase. Phosphorylation by F10 kinase seems to be required to form the membranes associated with IV.

It is found in the virion membrane. In terms of biological role, envelope protein which participates in virus morphogenesis. Needed for an early step in viral crescent membrane formation by interacting with D13 scaffold protein. Its interaction with D13 scaffold protein leads to the formation of rigid, crescent-shaped membranes that assemble around the cytoplasmic virus factory. Membrane anchor for the protein A27. A17-A27 virus envelope protein might be involved in fusion or attachment, and can further associate to A26. The polypeptide is Virion membrane protein A17 precursor homolog (Fowlpox virus (strain NVSL) (FPV)).